A 590-amino-acid chain; its full sequence is Melanophilin (590 aa).

A RabBD domain is found at 4–124 (RLDLSTLTDE…IGSLEWYYQH (121 aa)). The FYVE-type zinc-finger motif lies at 64–107 (CARCLQPYRLLLNSRRQCLECSLFVCKSCSHAHPEEQGWLCDPC). 5 disordered regions span residues 147-182 (GGGG…PLNS), 215-276 (SVPE…AELD), 311-335 (DTSD…ARTV), 361-472 (VLPP…SEIS), and 485-590 (GLTV…AQQP). Residues 154–172 (SLEEGNGDSEQTDEDGDLD) show a composition bias toward acidic residues. Positions 215 to 238 (SVPESAHSLQSLSGEPYSEDTTSL) are enriched in polar residues. Positions 339–485 (QILELNKRMS…SRIAALRAAG (147 aa)) form a coiled coil. A compositionally biased stretch (low complexity) spans 391 to 401 (LTSNISGSSTS). Basic and acidic residues predominate over residues 424–433 (GHMETQERNP).

Binds RAB27A that has been activated by GTP-binding via its N-terminus. Binds MYO5A via its C-terminal coiled coil domain. In terms of tissue distribution, highly expressed in embryos at day 7; not detectable at day 11. Highly expressed in adult stomach; detected at lower levels in kidney, lung, skin and small intestine. Detected in melanocytes.

Its subcellular location is the melanosome. Its function is as follows. Rab effector protein involved in melanosome transport. Serves as link between melanosome-bound RAB27A and the motor protein MYO5A. This Mus musculus (Mouse) protein is Melanophilin (Mlph).